A 182-amino-acid chain; its full sequence is Mid1-interacting protein 1 (182 aa).

Met-1 is modified (N-acetylmethionine). A disordered region spans residues 55–75; sequence VGGSGGCLEERTTPAPSPGSA. Residues Ser-71, Ser-74, and Ser-78 each carry the phosphoserine modification.

This sequence belongs to the SPOT14 family. In terms of assembly, homodimer in the absence of THRSP. Heterodimer with THRSP. The homodimer interacts with ACACA and ACACB. Promotes polymerization of Acetyl-CoA carboxylase to form complexes that contain MID1IP1 and ACACA and/or ACACB. Interaction with THRSP interferes with ACACA binding. In terms of tissue distribution, during embryonic development, expressed mainly in the neuroepithelial midline, urogenital apparatus and digits. Detected in adult white fat, liver, heart, brain and kidney. Expressed at very low levels in lactating mammary gland.

It localises to the nucleus. Its subcellular location is the cytoplasm. The protein localises to the cytoskeleton. Plays a role in the regulation of lipogenesis in liver. Up-regulates ACACA enzyme activity. Required for efficient lipid biosynthesis, including triacylglycerol, diacylglycerol and phospholipid. Involved in stabilization of microtubules. This is Mid1-interacting protein 1 (Mid1ip1) from Mus musculus (Mouse).